The primary structure comprises 103 residues: Pro-glucagon (103 aa).

The protein belongs to the glucagon family.

The protein localises to the secreted. Plays a key role in glucose metabolism and homeostasis. Regulates blood glucose by increasing gluconeogenesis and decreasing glycolysis. The sequence is that of Pro-glucagon (gcg) from Aquarana catesbeiana (American bullfrog).